A 464-amino-acid chain; its full sequence is ATP synthase subunit beta (464 aa).

ATP is bound at residue 153-160 (GGAGVGKT).

Belongs to the ATPase alpha/beta chains family. In terms of assembly, F-type ATPases have 2 components, CF(1) - the catalytic core - and CF(0) - the membrane proton channel. CF(1) has five subunits: alpha(3), beta(3), gamma(1), delta(1), epsilon(1). CF(0) has three main subunits: a(1), b(2) and c(9-12). The alpha and beta chains form an alternating ring which encloses part of the gamma chain. CF(1) is attached to CF(0) by a central stalk formed by the gamma and epsilon chains, while a peripheral stalk is formed by the delta and b chains.

The protein localises to the cell membrane. It catalyses the reaction ATP + H2O + 4 H(+)(in) = ADP + phosphate + 5 H(+)(out). Produces ATP from ADP in the presence of a proton gradient across the membrane. The catalytic sites are hosted primarily by the beta subunits. This chain is ATP synthase subunit beta, found in Clostridium novyi (strain NT).